The sequence spans 217 residues: Probable transaldolase (217 aa).

Lysine 85 (schiff-base intermediate with substrate) is an active-site residue.

The protein belongs to the transaldolase family. Type 3B subfamily.

It is found in the cytoplasm. The catalysed reaction is D-sedoheptulose 7-phosphate + D-glyceraldehyde 3-phosphate = D-erythrose 4-phosphate + beta-D-fructose 6-phosphate. Its pathway is carbohydrate degradation; pentose phosphate pathway; D-glyceraldehyde 3-phosphate and beta-D-fructose 6-phosphate from D-ribose 5-phosphate and D-xylulose 5-phosphate (non-oxidative stage): step 2/3. In terms of biological role, transaldolase is important for the balance of metabolites in the pentose-phosphate pathway. The chain is Probable transaldolase from Lachnoclostridium phytofermentans (strain ATCC 700394 / DSM 18823 / ISDg) (Clostridium phytofermentans).